Consider the following 96-residue polypeptide: uncharacterized protein (96 aa).

Positions E9 to R86 form a coiled coil.

Belongs to the WXG100 family. sagEsxA-like subfamily.

This is an uncharacterized protein from Clostridium acetobutylicum (strain ATCC 824 / DSM 792 / JCM 1419 / IAM 19013 / LMG 5710 / NBRC 13948 / NRRL B-527 / VKM B-1787 / 2291 / W).